A 398-amino-acid chain; its full sequence is tRNA-specific 2-thiouridylase MnmA (398 aa).

Residues 18-25 and Leu44 each bind ATP; that span reads AMSGGVDS. Residue Cys112 is the Nucleophile of the active site. Cys112 and Cys213 are joined by a disulfide. Gly136 lines the ATP pocket. The tract at residues 163–165 is interaction with tRNA; it reads RDQ. Cys213 functions as the Cysteine persulfide intermediate in the catalytic mechanism.

The protein belongs to the MnmA/TRMU family.

Its subcellular location is the cytoplasm. The catalysed reaction is S-sulfanyl-L-cysteinyl-[protein] + uridine(34) in tRNA + AH2 + ATP = 2-thiouridine(34) in tRNA + L-cysteinyl-[protein] + A + AMP + diphosphate + H(+). Catalyzes the 2-thiolation of uridine at the wobble position (U34) of tRNA, leading to the formation of s(2)U34. This chain is tRNA-specific 2-thiouridylase MnmA, found in Agrobacterium fabrum (strain C58 / ATCC 33970) (Agrobacterium tumefaciens (strain C58)).